Here is a 232-residue protein sequence, read N- to C-terminus: 7-cyano-7-deazaguanine synthase (232 aa).

7 to 17 (CSGGLDSVSLA) is a binding site for ATP. C185, C193, C196, and C199 together coordinate Zn(2+).

This sequence belongs to the QueC family. Zn(2+) serves as cofactor.

The catalysed reaction is 7-carboxy-7-deazaguanine + NH4(+) + ATP = 7-cyano-7-deazaguanine + ADP + phosphate + H2O + H(+). The protein operates within purine metabolism; 7-cyano-7-deazaguanine biosynthesis. In terms of biological role, catalyzes the ATP-dependent conversion of 7-carboxy-7-deazaguanine (CDG) to 7-cyano-7-deazaguanine (preQ(0)). The chain is 7-cyano-7-deazaguanine synthase from Chelativorans sp. (strain BNC1).